We begin with the raw amino-acid sequence, 570 residues long: Rho GTPase-activating protein gacEE (570 aa).

One can recognise a PH domain in the interval 127 to 233 (NSDISGVLLK…WVTTINNCID (107 aa)). The C2 domain occupies 224 to 343 (WVTTINNCID…PNGSEISLWL (120 aa)). Ca(2+) is bound by residues Asp-260, Asp-266, Asp-312, Asp-314, and Asp-320. Residues 381–567 (NSLEAIVKNR…FVFENSQQIL (187 aa)) form the Rho-GAP domain.

Requires Ca(2+) as cofactor.

The protein localises to the cytoplasm. Functionally, rho GTPase-activating protein involved in the signal transduction pathway. The polypeptide is Rho GTPase-activating protein gacEE (gacEE) (Dictyostelium discoideum (Social amoeba)).